Here is a 1222-residue protein sequence, read N- to C-terminus: Serine/threonine-protein kinase WNK4 (1222 aa).

Residues 1–17 (MLAPRNTETGVHMSQTE) show a composition bias toward polar residues. Residues 1 to 163 (MLAPRNTETG…KEDTETQAVA (163 aa)) form a disordered region. Phosphoserine is present on S95. Residues 135–152 (EPPRVPDAAARERRREQE) are compositionally biased toward basic and acidic residues. Residues K154 and K172 each participate in a glycyl lysine isopeptide (Lys-Gly) (interchain with G-Cter in ubiquitin) cross-link. The Protein kinase domain occupies 171–429 (LKFDIEIGRG…IQDLLTHAFF (259 aa)). Position 181 (S181) interacts with ATP. Residues K183, K223, and K238 each participate in a glycyl lysine isopeptide (Lys-Gly) (interchain with G-Cter in ubiquitin) cross-link. ATP contacts are provided by residues 251-254 (TELM) and K301. Residue D318 is the Proton acceptor of the active site. K325 participates in a covalent cross-link: Glycyl lysine isopeptide (Lys-Gly) (interchain with G-Cter in ubiquitin). Phosphoserine; by autocatalysis occurs at positions 328 and 332. Glycyl lysine isopeptide (Lys-Gly) (interchain with G-Cter in ubiquitin) cross-links involve residues K384, K390, K447, and K451. A disordered region spans residues 527–562 (LEVLPPDSGPPPATVSMTPGPPSAFPPEPEEPEADQ). The span at 533–553 (DSGPPPATVSMTPGPPSAFPP) shows a compositional bias: pro residues. An interaction with KLHL3 region spans residues 554–564 (EPEEPEADQHQ). S572 carries the phosphoserine modification. 5 disordered regions span residues 591–612 (FLDA…PAEP), 626–679 (RSGP…SVSD), 747–809 (DAGP…GTPF), 836–873 (QVSS…SPLP), and 927–1087 (SPGL…QPSP). A compositionally biased stretch (low complexity) spans 627–638 (SGPGSDFSPGDS). Basic residues predominate over residues 659-672 (NPVKTLRRRPRSRL). Low complexity-rich tracts occupy residues 792–809 (FSTS…GTPF) and 845–873 (APSS…SPLP). Residues 935–946 (PPAPPGPLPSMP) are compositionally biased toward pro residues. Polar residues predominate over residues 953-963 (DQESLSAQTAE). Residue K990 forms a Glycyl lysine isopeptide (Lys-Gly) (interchain with G-Cter in ubiquitin) linkage. An RFXV motif motif is present at residues 996–999 (RFQV). S1014 carries the post-translational modification Phosphoserine. A compositionally biased stretch (basic and acidic residues) spans 1044-1056 (ETREALAESDRAA). A compositionally biased stretch (polar residues) spans 1076–1086 (GGSSPILSQPS). Residues K1123, K1136, and K1137 each participate in a glycyl lysine isopeptide (Lys-Gly) (interchain with G-Cter in ubiquitin) cross-link. The interval 1169-1222 (SKGSFPTSRRNSLQRSDLPGPGIMRRNSLSGSSTGSQEQRASKGVTFAGDVGRM) is disordered. 2 stretches are compositionally biased toward polar residues: residues 1172–1183 (SFPTSRRNSLQR) and 1195–1207 (NSLS…SQEQ). S1196 bears the Phosphoserine mark.

This sequence belongs to the protein kinase superfamily. Ser/Thr protein kinase family. WNK subfamily. In terms of assembly, interacts with the C-terminal region of KCNJ1. Interacts with WNK1 and WNK3. Interacts with KLHL3. The cofactor is Mg(2+). In terms of processing, autophosphorylated at Ser-328 and Ser-332, promoting its activation. Phosphorylated by WNK1 and WNK3. Phosphorylated at Ser-572 in a MAP3K15/ASK3-dependent process in response to osmotic stress or hypotonic low-chloride stimulation. Ubiquitinated by the BCR(KLHL3) complex, leading to its degradation. Also ubiquitinated by the BCR(KLHL2) complex.

The protein resides in the cell junction. Its subcellular location is the tight junction. The enzyme catalyses L-seryl-[protein] + ATP = O-phospho-L-seryl-[protein] + ADP + H(+). The catalysed reaction is L-threonyl-[protein] + ATP = O-phospho-L-threonyl-[protein] + ADP + H(+). Its activity is regulated as follows. Activation requires autophosphorylation of Ser-328 and Ser-332. Autophosphorylation and subsequent activation is inhibited by increases in intracellular ionic strength: Cl(-) potently inhibits WNK4 kinase activity via direct binding. Also inhibited by K(+) ions. Serine/threonine-protein kinase component of the WNK4-SPAK/OSR1 kinase cascade, which acts as a key regulator of ion transport in the distal nephron and blood pressure. The WNK4-SPAK/OSR1 kinase cascade is composed of WNK4, which mediates phosphorylation and activation of downstream kinases OXSR1/OSR1 and STK39/SPAK. Following activation, OXSR1/OSR1 and STK39/SPAK catalyze phosphorylation of ion cotransporters, such as SLC12A1/NKCC2, SLC12A2/NKCC1, SLC12A3/NCC, SLC12A5/KCC2 or SLC12A6/KCC3, regulating their activity. Acts as a molecular switch that regulates the balance between renal salt reabsorption and K(+) secretion by modulating the activities of renal transporters and channels, including the Na-Cl cotransporter SLC12A3/NCC and the K(+) channel, KCNJ1/ROMK. Regulates NaCl reabsorption in the distal nephron by activating the thiazide-sensitive Na-Cl cotransporter SLC12A3/NCC in distal convoluted tubule cells of kidney: activates SLC12A3/NCC in a OXSR1/OSR1- and STK39/SPAK-dependent process. Also acts as a scaffold protein independently of its protein kinase activity: negatively regulates cell membrane localization of various transporters and channels (CFTR, KCNJ1/ROMK, SLC4A4, SLC26A9 and TRPV4) by clathrin-dependent endocytosis. Also inhibits the activity of the epithelial Na(+) channel (ENaC) SCNN1A, SCNN1B, SCNN1D in a inase-independent mechanism. May also phosphorylate NEDD4L. In Rattus norvegicus (Rat), this protein is Serine/threonine-protein kinase WNK4.